The following is a 513-amino-acid chain: Leucine-rich repeat-containing protein 24 (513 aa).

A signal peptide spans 1 to 20; it reads MALRAPALLPLLLLLLPLRA. The 30-residue stretch at 21-50 folds into the LRRNT domain; that stretch reads AGCPAACRCYSATVECGALRLRVVPLGIPP. LRR repeat units lie at residues 51-72, 75-96, 99-120, 123-144, 147-168, and 171-192; these read GTQT…ALAP, ALRR…AFRA, RLLE…AFVG, QLRV…TFLH, RLQE…ALAG, and SLAL…ALQP. One can recognise an LRRCT domain in the interval 204–259; the sequence is NPWRCDCALHWLGAWIKEGGQRLLTSRDRKIMCAEPPRLALQSLLDVSHSSLICIP. An Ig-like C2-type domain is found at 260–361; that stretch reads PSVHVQPLEL…GAARVPFRLL (102 aa). Cysteines 281 and 345 form a disulfide. N-linked (GlcNAc...) asparagine glycans are attached at residues Asn334 and Asn363. The tract at residues 365-391 is disordered; the sequence is SRQQPQQPAQPPPPAARPAGSEPRPEA. Residues 406-426 form a helical membrane-spanning segment; that stretch reads AIAAAIALLALTALLLVAMIC.

The protein resides in the membrane. The sequence is that of Leucine-rich repeat-containing protein 24 (LRRC24) from Homo sapiens (Human).